The sequence spans 159 residues: Ribosomal RNA large subunit methyltransferase H (159 aa).

S-adenosyl-L-methionine contacts are provided by residues L76, G108, and 127–132 (FGRLTL).

Belongs to the RNA methyltransferase RlmH family. As to quaternary structure, homodimer.

It localises to the cytoplasm. The catalysed reaction is pseudouridine(1915) in 23S rRNA + S-adenosyl-L-methionine = N(3)-methylpseudouridine(1915) in 23S rRNA + S-adenosyl-L-homocysteine + H(+). Its function is as follows. Specifically methylates the pseudouridine at position 1915 (m3Psi1915) in 23S rRNA. The protein is Ribosomal RNA large subunit methyltransferase H of Listeria monocytogenes serotype 4b (strain CLIP80459).